Reading from the N-terminus, the 418-residue chain is Elongation factor 1-gamma 1 (418 aa).

A GST N-terminal domain is found at 1–82 (MALVLHTFDG…YVTRSKSDNP (82 aa)). The 127-residue stretch at 87 to 213 (SLIEYAHIEQ…GDVKQADSVP (127 aa)) folds into the GST C-terminal domain. Positions 211-265 (SVPQVQKKAAAPKEQKPKEAKKEAPKEAPKPKAAEKPEEEEEAPKPKPKNPLDLL) are disordered. The span at 221–246 (APKEQKPKEAKKEAPKEAPKPKAAEK) shows a compositional bias: basic and acidic residues. Residues 258–418 (PKNPLDLLPP…EALLDAKCFK (161 aa)) enclose the EF-1-gamma C-terminal domain.

As to quaternary structure, EF-1 is composed of four subunits: alpha, beta, delta, and gamma.

In terms of biological role, probably plays a role in anchoring the complex to other cellular components. The polypeptide is Elongation factor 1-gamma 1 (Oryza sativa subsp. japonica (Rice)).